We begin with the raw amino-acid sequence, 156 residues long: Small ribosomal subunit protein eS10 (156 aa).

Residues L91–E156 are disordered. The segment covering T95 to G119 has biased composition (basic and acidic residues).

Belongs to the eukaryotic ribosomal protein eS10 family.

It is found in the cytoplasm. The sequence is that of Small ribosomal subunit protein eS10 (RPS10) from Lumbricus rubellus (Humus earthworm).